The chain runs to 76 residues: Esculentin-2MT3 (76 aa).

A signal peptide spans 1–22 (MFTLKKSMLLLFFLGTISLSLC). Positions 23–37 (EEERNADEDDGEKEV) are cleaved as a propeptide — removed in mature form. Cys-70 and Cys-76 are oxidised to a cystine.

Belongs to the frog skin active peptide (FSAP) family. Esculentin subfamily. Expressed by the skin glands.

It is found in the secreted. Its function is as follows. Antimicrobial peptide. The chain is Esculentin-2MT3 from Amolops mantzorum (Sichuan torrent frog).